Reading from the N-terminus, the 1339-residue chain is Receptor tyrosine-protein kinase erbB-3 (1339 aa).

Residues 1–19 (MSAIGTLQVLGFLLSLARG) form the signal peptide. At 20–641 (SEMGNSQAVC…QAEVLMSKPH (622 aa)) the chain is on the extracellular side. Residue N126 is glycosylated (N-linked (GlcNAc...) asparagine). Intrachain disulfides connect C186–C194, C190–C202, C210–C218, C214–C226, C227–C235, C231–C243, C246–C255, C259–C286, C290–C301, C305–C320, and C323–C327. N-linked (GlcNAc...) asparagine glycosylation is present at N250. 5 N-linked (GlcNAc...) asparagine glycosylation sites follow: N353, N408, N414, N437, and N469. Disulfide bonds link C500-C509, C504-C517, C520-C529, C533-C549, C552-C565, C556-C573, C576-C585, C589-C610, C613-C621, and C617-C629. N-linked (GlcNAc...) asparagine glycosylation is present at N522. N-linked (GlcNAc...) asparagine glycosylation is present at N566. N-linked (GlcNAc...) asparagine glycosylation occurs at N616. Residues 642 to 662 (LVIAVTVGLTVIFLILGGSFL) form a helical membrane-spanning segment. Over 663 to 1339 (YWRGRRIQNK…LFPKANAQRI (677 aa)) the chain is Cytoplasmic. S684 bears the Phosphoserine mark. The Protein kinase domain maps to 707–964 (LRKLKVLGSG…TFKELANEFT (258 aa)). Residues 713–721 (LGSGVFGTV), K740, 786–788 (QYL), and 832–837 (DLALRN) each bind ATP. The active-site Proton acceptor is D832. S980 is subject to Phosphoserine. Disordered stretches follow at residues 1028–1052 (LSLPTGTLTRPRGSQSLLSPSSGYM), 1077–1156 (RPIS…GNGY), and 1181–1212 (SVLGTEEEDEDEEYEYMNRKRRGSPARPPRPG). Acidic residues predominate over residues 1185–1195 (TEEEDEDEEYE).

This sequence belongs to the protein kinase superfamily. Tyr protein kinase family. EGF receptor subfamily. As to quaternary structure, monomer and homodimer. Heterodimer with each of the other ERBB receptors (Potential). Interacts with CSPG5, PA2G4, GRB7 and MUC1. Interacts with MYOC. Found in a ternary complex with NRG1 and ITGAV:ITGB3 or ITGA6:ITGB4. Post-translationally, autophosphorylated. Ligand-binding increases phosphorylation on tyrosine residues and promotes its association with the p85 subunit of phosphatidylinositol 3-kinase. In terms of tissue distribution, in the muscle, expression localizes to the synaptic sites of muscle fibers.

It is found in the membrane. The catalysed reaction is L-tyrosyl-[protein] + ATP = O-phospho-L-tyrosyl-[protein] + ADP + H(+). Tyrosine-protein kinase that plays an essential role as cell surface receptor for neuregulins. Binds to neuregulin-1 (NRG1) and is activated by it; ligand-binding increases phosphorylation on tyrosine residues and promotes its association with the p85 subunit of phosphatidylinositol 3-kinase. May also be activated by CSPG5. Involved in the regulation of myeloid cell differentiation. This is Receptor tyrosine-protein kinase erbB-3 (Erbb3) from Mus musculus (Mouse).